The following is a 184-amino-acid chain: Peptidoglycan-recognition protein SC2 (184 aa).

The first 20 residues, 1–20 (MANKALILLAVLFCAQAVLG), serve as a signal peptide directing secretion. The N-acetylmuramoyl-L-alanine amidase domain maps to 45-169 (SYAVIHHTAG…RQVGSTECPG (125 aa)). H50 serves as a coordination point for Zn(2+). A disulfide bridge connects residues C57 and C63. H159 and C167 together coordinate Zn(2+).

This sequence belongs to the N-acetylmuramoyl-L-alanine amidase 2 family. Zn(2+) serves as cofactor. Constitutively expressed at high level in gut, in addition to the induced expression in fat body.

The protein localises to the secreted. It carries out the reaction Hydrolyzes the link between N-acetylmuramoyl residues and L-amino acid residues in certain cell-wall glycopeptides.. In terms of biological role, N-acetylmuramyl-L-alanine amidase involved in innate immunity by degrading bacterial peptidoglycans (PGN). Probably plays a scavenger role by digesting biologically active PGN into biologically inactive fragments. Has no direct bacteriolytic activity. In Drosophila melanogaster (Fruit fly), this protein is Peptidoglycan-recognition protein SC2 (PGRP-SC2).